Here is a 567-residue protein sequence, read N- to C-terminus: Methionine--tRNA ligase (567 aa).

Positions 11–21 (PYVQTVPHLGN) match the 'HIGH' region motif. Zn(2+) is bound by residues C143, C146, C156, and C159. A 'KMSKS' region motif is present at residues 331 to 335 (KFSKS). Residue K334 coordinates ATP.

Belongs to the class-I aminoacyl-tRNA synthetase family. MetG type 1 subfamily. Requires Zn(2+) as cofactor.

It localises to the cytoplasm. It carries out the reaction tRNA(Met) + L-methionine + ATP = L-methionyl-tRNA(Met) + AMP + diphosphate. Functionally, is required not only for elongation of protein synthesis but also for the initiation of all mRNA translation through initiator tRNA(fMet) aminoacylation. This Pyrobaculum islandicum (strain DSM 4184 / JCM 9189 / GEO3) protein is Methionine--tRNA ligase.